Here is a 400-residue protein sequence, read N- to C-terminus: MAFLSDTLARVKPSQTIAVTNKARELAAAGRDVIGLGAGEPDFDTPDNIKAAAKRAIDAGRTKYTAVDGIPELKRAICEKFERENGLKYTPAQVTVGTGGKQILYNALVATLNPGDEVIIPAPYWVSYPDMVLLAGGTPVSVAAGMETGFKLTPEQLEAAITPRTKWFIFNSPSNPTGAAYTRAELAALCEVLMRHPQVWIMSDDMYEHLVFDDFDFTTPAQIEPGLYDRTLTCNGVSKAYCMTGWRIGYAAGPVELIRAMGTIQSQSTSNPCSIAQYAALEALSGPQEFLATNREAFQRRRDLVVSMLNEAKGVTCPNPEGAFYVYPDISGCIGKTSAGGAKITDDEAFASALLEETGVAVVFGAAFGLSPNFRISYATADEVLREACARIQAFCAGLS.

3 residues coordinate L-aspartate: G39, W125, and N175. The residue at position 239 (K239) is an N6-(pyridoxal phosphate)lysine. R375 is a binding site for L-aspartate.

This sequence belongs to the class-I pyridoxal-phosphate-dependent aminotransferase family. Homodimer. Pyridoxal 5'-phosphate serves as cofactor.

It is found in the cytoplasm. It catalyses the reaction L-aspartate + 2-oxoglutarate = oxaloacetate + L-glutamate. The enzyme catalyses L-arogenate + 2-oxoglutarate = prephenate + L-glutamate. In terms of biological role, catalyzes the reversible conversion of aspartate and 2-oxoglutarate to glutamate and oxaloacetate. Can also transaminate prephenate in the presence of glutamate. The protein is Aspartate/prephenate aminotransferase of Cereibacter sphaeroides (strain ATCC 17029 / ATH 2.4.9) (Rhodobacter sphaeroides).